The sequence spans 193 residues: 3-isopropylmalate dehydratase small subunit (193 aa).

This sequence belongs to the LeuD family. LeuD type 1 subfamily. In terms of assembly, heterodimer of LeuC and LeuD.

The enzyme catalyses (2R,3S)-3-isopropylmalate = (2S)-2-isopropylmalate. The protein operates within amino-acid biosynthesis; L-leucine biosynthesis; L-leucine from 3-methyl-2-oxobutanoate: step 2/4. In terms of biological role, catalyzes the isomerization between 2-isopropylmalate and 3-isopropylmalate, via the formation of 2-isopropylmaleate. In Listeria innocua serovar 6a (strain ATCC BAA-680 / CLIP 11262), this protein is 3-isopropylmalate dehydratase small subunit.